The following is a 422-amino-acid chain: 5-methylthioadenosine/S-adenosylhomocysteine deaminase 1 (422 aa).

The Zn(2+) site is built by His-56 and His-58. Substrate-binding residues include Glu-85 and His-174. His-201 is a binding site for Zn(2+). Substrate contacts are provided by Glu-204 and Asp-290. Asp-290 provides a ligand contact to Zn(2+).

This sequence belongs to the metallo-dependent hydrolases superfamily. MTA/SAH deaminase family. It depends on Zn(2+) as a cofactor.

It catalyses the reaction S-adenosyl-L-homocysteine + H2O + H(+) = S-inosyl-L-homocysteine + NH4(+). The catalysed reaction is S-methyl-5'-thioadenosine + H2O + H(+) = S-methyl-5'-thioinosine + NH4(+). Catalyzes the deamination of 5-methylthioadenosine and S-adenosyl-L-homocysteine into 5-methylthioinosine and S-inosyl-L-homocysteine, respectively. Is also able to deaminate adenosine. The protein is 5-methylthioadenosine/S-adenosylhomocysteine deaminase 1 of Archaeoglobus fulgidus (strain ATCC 49558 / DSM 4304 / JCM 9628 / NBRC 100126 / VC-16).